Here is a 355-residue protein sequence, read N- to C-terminus: GTP 3',8-cyclase (355 aa).

In terms of domain architecture, Radical SAM core spans 16 to 242 (RYGRRATDMR…PDPRARDGAP (227 aa)). Arg25 is a binding site for GTP. 2 residues coordinate [4Fe-4S] cluster: Cys32 and Cys36. Tyr38 serves as a coordination point for S-adenosyl-L-methionine. Position 39 (Cys39) interacts with [4Fe-4S] cluster. Arg76 is a binding site for GTP. S-adenosyl-L-methionine is bound at residue Gly80. Position 107 (Thr107) interacts with GTP. Ser131 lines the S-adenosyl-L-methionine pocket. Lys168 provides a ligand contact to GTP. Met202 lines the S-adenosyl-L-methionine pocket. Residues Cys277 and Cys280 each contribute to the [4Fe-4S] cluster site. GTP is bound at residue 282-284 (RTR). Cys294 provides a ligand contact to [4Fe-4S] cluster.

This sequence belongs to the radical SAM superfamily. MoaA family. Monomer. [4Fe-4S] cluster is required as a cofactor.

The catalysed reaction is GTP + AH2 + S-adenosyl-L-methionine = (8S)-3',8-cyclo-7,8-dihydroguanosine 5'-triphosphate + 5'-deoxyadenosine + L-methionine + A + H(+). It functions in the pathway cofactor biosynthesis; molybdopterin biosynthesis. In terms of biological role, catalyzes, together with MoaC, the conversion of 5'-GTP to cyclic pyranopterin monophosphate (cPMP or molybdopterin precursor Z). Its function is as follows. Catalyzes the cyclization of GTP to (8S)-3',8-cyclo-7,8-dihydroguanosine 5'-triphosphate. The sequence is that of GTP 3',8-cyclase from Paenarthrobacter nicotinovorans (Arthrobacter nicotinovorans).